Here is a 714-residue protein sequence, read N- to C-terminus: ATP-dependent DNA helicase DinG (714 aa).

The region spanning 17-294 is the Helicase ATP-binding domain; it reads ALQDQIPDFI…TCMEQFRPKT (278 aa). 54–61 serves as a coordination point for ATP; sequence APTGVGKT. Residues Cys-120, Cys-194, Cys-199, and Cys-205 each coordinate [4Fe-4S] cluster. Residues 248-251 carry the DEAH box motif; sequence DEGH. The region spanning 517 to 698 is the Helicase C-terminal domain; the sequence is HIAEMAAYFR…VFPIEQPAVP (182 aa).

Belongs to the helicase family. DinG subfamily. Type 1 sub-subfamily. It depends on [4Fe-4S] cluster as a cofactor.

It catalyses the reaction Couples ATP hydrolysis with the unwinding of duplex DNA at the replication fork by translocating in the 5'-3' direction. This creates two antiparallel DNA single strands (ssDNA). The leading ssDNA polymer is the template for DNA polymerase III holoenzyme which synthesizes a continuous strand.. The catalysed reaction is ATP + H2O = ADP + phosphate + H(+). DNA-dependent ATPase and 5'-3' DNA helicase. Unwinds D-loops, R-loops, forked DNA and G-quadruplex DNA. The sequence is that of ATP-dependent DNA helicase DinG from Salmonella paratyphi A (strain ATCC 9150 / SARB42).